The primary structure comprises 211 residues: UPF0329 protein ECU07_1880/ECU10_0020 (211 aa).

This sequence belongs to the UPF0329 family.

The polypeptide is UPF0329 protein ECU07_1880/ECU10_0020 (Encephalitozoon cuniculi (strain GB-M1) (Microsporidian parasite)).